The sequence spans 250 residues: 5'-nucleotidase SurE (250 aa).

The a divalent metal cation site is built by Asp-8, Asp-9, Ser-39, and Asn-91.

This sequence belongs to the SurE nucleotidase family. It depends on a divalent metal cation as a cofactor.

It localises to the cytoplasm. The enzyme catalyses a ribonucleoside 5'-phosphate + H2O = a ribonucleoside + phosphate. Nucleotidase that shows phosphatase activity on nucleoside 5'-monophosphates. The chain is 5'-nucleotidase SurE from Leptospira borgpetersenii serovar Hardjo-bovis (strain L550).